A 202-amino-acid chain; its full sequence is Matrix protein (202 aa).

Residues 9–31 (KNRRDEDTQKSSPASAPLDDDDL) form a disordered region. Residues 35-38 (PPEY) carry the PPXY motif motif. The segment at 115 to 151 (KLRRTFIFQWADSRGPLEGEELEYSQEITWDDDTEFV) is essential for glycoprotein binding.

Belongs to the lyssavirus matrix protein family. Homomultimer. Interacts with nucleoprotein and with the cytoplasmic domain of glycoprotein. Interacts with host ATP6V1A; this interaction plays an important role in virion uncoating after viral entry.

It is found in the virion membrane. The protein localises to the host endomembrane system. The protein resides in the host cytoplasm. Plays a major role in assembly, budding and uncoating of virion after membrane fusion. Completely covers the ribonucleoprotein coil and keep it in condensed bullet-shaped form. Inhibits viral transcription and stimulates replication. Plays a major role in early induction of TRAIL-mediated apoptosis in infected neurons. Inhibits the integrated stress response (ISR) in the infected cell by blocking the formation of stress granules. The sequence is that of Matrix protein (M) from Rabies virus (strain SAD B19) (RABV).